A 236-amino-acid chain; its full sequence is Serine/arginine-rich SC35-like splicing factor SCL28 (236 aa).

Disordered stretches follow at residues 1–53 (MARA…LIRN) and 124–219 (EENR…RVLT). The segment covering 14–43 (RPRDRSPPRERKGYDDNRLRERPSSRDHES) has biased composition (basic and acidic residues). One can recognise an RRM domain in the interval 47–125 (SGLLIRNLPL…REIAIVFAEE (79 aa)). Residues 149–176 (TSHRSPRRRYRSHSRSRSPPRRESRHSK) show a composition bias toward basic residues. Position 184 is a phosphoserine (serine 184). Residues 199–217 (RNEREYKSRNCRSPREERV) are compositionally biased toward basic and acidic residues.

The protein belongs to the splicing factor SR family. SCL subfamily. Component of the spliceosome. Interacts with RS2Z33, CYP59, CYP63 and CYP95.

It is found in the nucleus speckle. In terms of biological role, involved in intron recognition and spliceosome assembly. Probably active at the 5' splice sites. The sequence is that of Serine/arginine-rich SC35-like splicing factor SCL28 (SCL28) from Arabidopsis thaliana (Mouse-ear cress).